A 396-amino-acid chain; its full sequence is MKIKTGVGILALSALTTMMISAPALAKIEEGKLVIWINGDKGYNGLAEVGKKFEQDTGIKVTVEHPDKLEEKFPQVAATGDGPDIIFWAHDRFGGYAQSGLLAEVTPDKAFQDKLYPFTWDAVRYNGKLIAYPIAVEALSLIYNKDLVPNPPKTWEEIPALDKELKVKGKSAIMFNLQEPYFTWPLIAADGGYAFKFENGKYDVKDVGVDNAGAKAGLTFLIDMIKNKNMSADTDYSIAEAAFNKGETAMTINGPWAWSNIDKSKVNYGVTLLPTFKGKPSKPFVGVLSAGINAASPNKELAKEFLENYLLTDQGLEAVNKDKPLGAVALKSFQEQLAKDPRIAATMDNAQKGEIMPNIPQMSAFWYAVRTAVINAASGRQTVDAALKDAQSRITK.

Positions 1-26 are cleaved as a signal peptide; sequence MKIKTGVGILALSALTTMMISAPALA.

This sequence belongs to the bacterial solute-binding protein 1 family. As to quaternary structure, the complex is composed of two ATP-binding proteins (MalK), two transmembrane proteins (MalG and MalF) and a solute-binding protein (MalE).

Its subcellular location is the periplasm. Functionally, part of the ABC transporter complex MalEFGK involved in maltose/maltodextrin import. Binds maltose and higher maltodextrins. This chain is Maltose/maltodextrin-binding periplasmic protein (malE), found in Salmonella typhimurium (strain LT2 / SGSC1412 / ATCC 700720).